A 246-amino-acid chain; its full sequence is Exosome complex component Rrp41 (246 aa).

The protein belongs to the RNase PH family. Rrp41 subfamily. In terms of assembly, component of the archaeal exosome complex. Forms a hexameric ring-like arrangement composed of 3 Rrp41-Rrp42 heterodimers. The hexameric ring associates with a trimer of Rrp4 and/or Csl4 subunits.

Its subcellular location is the cytoplasm. Its function is as follows. Catalytic component of the exosome, which is a complex involved in RNA degradation. Has 3'-&gt;5' exoribonuclease activity. Can also synthesize heteromeric RNA-tails. The sequence is that of Exosome complex component Rrp41 from Aeropyrum pernix (strain ATCC 700893 / DSM 11879 / JCM 9820 / NBRC 100138 / K1).